We begin with the raw amino-acid sequence, 535 residues long: Phosphoenolpyruvate carboxykinase (ATP) (535 aa).

Substrate-binding residues include arginine 59, tyrosine 201, and lysine 207. Residues lysine 207, histidine 226, and 243–251 (GLSGTGKTT) contribute to the ATP site. Lysine 207 and histidine 226 together coordinate Mn(2+). Aspartate 264 provides a ligand contact to Mn(2+). Residues glutamate 292, arginine 328, 444–445 (RI), and threonine 450 each bind ATP. Arginine 328 is a binding site for substrate.

It belongs to the phosphoenolpyruvate carboxykinase (ATP) family. It depends on Mn(2+) as a cofactor.

The protein localises to the cytoplasm. The enzyme catalyses oxaloacetate + ATP = phosphoenolpyruvate + ADP + CO2. The protein operates within carbohydrate biosynthesis; gluconeogenesis. Functionally, involved in the gluconeogenesis. Catalyzes the conversion of oxaloacetate (OAA) to phosphoenolpyruvate (PEP) through direct phosphoryl transfer between the nucleoside triphosphate and OAA. In Porphyromonas gingivalis (strain ATCC 33277 / DSM 20709 / CIP 103683 / JCM 12257 / NCTC 11834 / 2561), this protein is Phosphoenolpyruvate carboxykinase (ATP).